We begin with the raw amino-acid sequence, 314 residues long: SERTA domain-containing protein 2 (314 aa).

The region spanning Tyr33 to Gly80 is the SERTA domain. Disordered stretches follow at residues Lys77–Asp119 and Pro181–Met222. Polar residues predominate over residues Thr87 to Ser97. Over residues Thr182 to Thr193 the composition is skewed to low complexity. Positions Gly210–Leu221 are enriched in basic and acidic residues. Residues Thr235–Leu311 are required for transactivation activity. Residues Leu238–Leu243 carry the Nuclear export signal (NES) motif.

In terms of assembly, interacts with XPO1; which mediates nuclear export. Interacts with TFDP1; modulates transactivation activity of TFDP1/E2F complexes. Polyubiquitinated, which promotes proteasomal degradation. In terms of tissue distribution, expressed in adipose tissue.

It is found in the nucleus. The protein localises to the cytoplasm. In terms of biological role, acts at E2F-responsive promoters as coregulator to integrate signals provided by PHD- and/or bromodomain-containing transcription factors. May act as coactivator as well as corepressor of E2F1-TFDP1 and E2F4-TFDP1 complexes on E2F consensus binding sites, which would activate or inhibit E2F-target genes expression. Modulates fat storage by down-regulating the expression of key genes involved in adipocyte lipolysis, thermogenesis and oxidative metabolism. The sequence is that of SERTA domain-containing protein 2 (SERTAD2) from Homo sapiens (Human).